The chain runs to 138 residues: MERTFAIIKPDAVERGLSGKIITKIEEAGFAIVGMKKIHLSRAQAEGFYYVHKERPFFNDLCSFMSRSPVIVMCLQKENAIADWRTLMGATNPANAEPGTIRKEFAKNIEENSSHGSDAPETAAFEIPYFFNSFELVG.

ATP is bound by residues Lys-9, Phe-57, Arg-85, Thr-91, Arg-102, and Asn-112. His-115 serves as the catalytic Pros-phosphohistidine intermediate.

Belongs to the NDK family. In terms of assembly, homotetramer. It depends on Mg(2+) as a cofactor.

It localises to the cytoplasm. The catalysed reaction is a 2'-deoxyribonucleoside 5'-diphosphate + ATP = a 2'-deoxyribonucleoside 5'-triphosphate + ADP. It carries out the reaction a ribonucleoside 5'-diphosphate + ATP = a ribonucleoside 5'-triphosphate + ADP. In terms of biological role, major role in the synthesis of nucleoside triphosphates other than ATP. The ATP gamma phosphate is transferred to the NDP beta phosphate via a ping-pong mechanism, using a phosphorylated active-site intermediate. This chain is Nucleoside diphosphate kinase, found in Trichlorobacter lovleyi (strain ATCC BAA-1151 / DSM 17278 / SZ) (Geobacter lovleyi).